An 808-amino-acid chain; its full sequence is MVSDMLGGNKRWILFGLLSFLLNCVLVSCSVEDIEKAANDSFLWGPYRPNLYVGIRPKIPDSLMTGLMWSNVDDYARFSKMRHSAEHGDDIGAFGWKHYDVRRGGQQVIDDFLMGIKLETDFVKLPEGNWALRVHGIPLPGAPTDLTTSLFFYAYVEGEGKVGTKVNHANHVYMEGKTPDLGKFRIQTFNRLGEHPVSPASVDLESMVMDKDFFAGFNVKKEGAWRTSELILYLLDTKMKVISDKEGYESLKDLPPAYSTLTLPNLPSEEGLQFIQKVFKGEFMFDIVFNYASSKKISEEMISQAIDKNLQEFEEKFQATFPLKAPYDTEKAHQIFAHTAFSNLFGNVGFFTGDSIVSKNPIELDDEDYEFMQGFESAAGKLAEGTAFHDIERSLFTIVPSRPHFPRGFYWDEGFHLLPVGLWDNDFSLEILKSWFSLVNEDGWVGREQILGEEARSKVPDEFQTQYPDIANPPTLILALKGYIERLQEQQGKLNNRFSGEGEDYSLDDLEYLRSVSISNPEKSVQFLRDLFPLLLRHYEWFRETQKGDFETWERECFSQVEGYRWRGRTYQHCLASGLDDYPRAQPPSTAELHVDLLSWMTSFTRSLHFVAEFLGETEEAEKLAGYENAMLRNLEDNHWDEEVQAYCDSSVDEYDDPINVCHKGYVTLLPMMLGLLPADSGRLTSLLKLIRDENELWSPYGIRSLSMNDVYFGTGENYWRGPIWINMNYLILSSLYQNYINTPGPNQNLARSIYEELRTNVVNNVFENWRQTGIFWEQYDPTTGKGQRTKDFTGWTSLVVNIMSENY.

Residues 1–11 (MVSDMLGGNKR) are Cytoplasmic-facing. A helical; Signal-anchor for type II membrane protein membrane pass occupies residues 12-31 (WILFGLLSFLLNCVLVSCSV). The Lumenal portion of the chain corresponds to 32 to 808 (EDIEKAANDS…LVVNIMSENY (777 aa)). N-linked (GlcNAc...) asparagine glycosylation occurs at Asn-39. The active-site Proton donor is the Asp-580. Catalysis depends on Glu-778, which acts as the Proton acceptor.

This sequence belongs to the glycosyl hydrolase 63 family.

Its subcellular location is the endoplasmic reticulum membrane. The catalysed reaction is N(4)-(alpha-D-Glc-(1-&gt;2)-alpha-D-Glc-(1-&gt;3)-alpha-D-Glc-(1-&gt;3)-alpha-D-Man-(1-&gt;2)-alpha-D-Man-(1-&gt;2)-alpha-D-Man-(1-&gt;3)-[alpha-D-Man-(1-&gt;2)-alpha-D-Man-(1-&gt;3)-[alpha-D-Man-(1-&gt;2)-alpha-D-Man-(1-&gt;6)]-alpha-D-Man-(1-&gt;6)]-beta-D-Man-(1-&gt;4)-beta-D-GlcNAc-(1-&gt;4)-beta-D-GlcNAc)-L-asparaginyl-[protein] + H2O = N(4)-(alpha-D-Glc-(1-&gt;3)-alpha-D-Glc-(1-&gt;3)-alpha-D-Man-(1-&gt;2)-alpha-D-Man-(1-&gt;2)-alpha-D-Man-(1-&gt;3)-[alpha-D-Man-(1-&gt;2)-alpha-D-Man-(1-&gt;3)-[alpha-D-Man-(1-&gt;2)-alpha-D-Man-(1-&gt;6)]-alpha-D-Man-(1-&gt;6)]-beta-D-Man-(1-&gt;4)-beta-D-GlcNAc-(1-&gt;4)-beta-D-GlcNAc)-L-asparaginyl-[protein] + beta-D-glucose. Cleaves the distal alpha 1,2-linked glucose residue from the Glc(3)Man(9)GlcNAc(2) oligosaccharide precursor highly specifically. In Schizosaccharomyces pombe (strain 972 / ATCC 24843) (Fission yeast), this protein is Probable mannosyl-oligosaccharide glucosidase.